The chain runs to 60 residues: UPF0434 protein KPN78578_09190 (60 aa).

This sequence belongs to the UPF0434 family.

This Klebsiella pneumoniae subsp. pneumoniae (strain ATCC 700721 / MGH 78578) protein is UPF0434 protein KPN78578_09190.